We begin with the raw amino-acid sequence, 148 residues long: UPF0178 protein EF_0842 (148 aa).

Belongs to the UPF0178 family.

This chain is UPF0178 protein EF_0842, found in Enterococcus faecalis (strain ATCC 700802 / V583).